The primary structure comprises 357 residues: Cobalt-precorrin-5B C(1)-methyltransferase (357 aa).

It belongs to the CbiD family.

It catalyses the reaction Co-precorrin-5B + S-adenosyl-L-methionine = Co-precorrin-6A + S-adenosyl-L-homocysteine. The protein operates within cofactor biosynthesis; adenosylcobalamin biosynthesis; cob(II)yrinate a,c-diamide from sirohydrochlorin (anaerobic route): step 6/10. In terms of biological role, catalyzes the methylation of C-1 in cobalt-precorrin-5B to form cobalt-precorrin-6A. The protein is Cobalt-precorrin-5B C(1)-methyltransferase of Gloeobacter violaceus (strain ATCC 29082 / PCC 7421).